The sequence spans 564 residues: MTSTTEPMTDLHIAQQAVLHPIFDIADAAGIPEEALEQYGRYKAKVDVRKVPDSGRAGRVVLVTAVSPTPAGEGKSTTTVGLADSLNRAFEQEGTGRRSMIALREPSLGPTLGMKGGATGGGYSQVLPMDEINLHFTGDLHAINSANNALCALIDNHIYQGNVLNIDPRRITFKRVLDMNDRALREVVIGLGGPTQGVPRQDGFDITVASEIMAVFCLATDLNDLKSRIGKITFGYNYDRQPLTVAGLGVEGVLTLLLKEAIKPNLVQTLAGTAALVHGGPFANIAHGCNSVIATSLARRRADVVVTEAGFGADLGAEKYMDIKSRFADVAPSAVVIVATIRALKMHGGVPKTELSVSDVAALRRGVTNLARHISNVRQFGLDPVVSINRFTSDSEEELDWLVSWCESQGVSIAIADVWGRGGGGDDLAAKVLAALDAPSDFRHLYELELPVKEKIELIAQKIYGAERVEFSSSALKRIAEISANGWDSLPVCMAKTQYSFSDDASLLGAPSGFVLHVRDLVPKTGAGFIVALTGAVMTMPGLPKQPAALKMDVDAEGNSVGLS.

69 to 76 serves as a coordination point for ATP; that stretch reads TPAGEGKS.

The protein belongs to the formate--tetrahydrofolate ligase family.

The catalysed reaction is (6S)-5,6,7,8-tetrahydrofolate + formate + ATP = (6R)-10-formyltetrahydrofolate + ADP + phosphate. It functions in the pathway one-carbon metabolism; tetrahydrofolate interconversion. This Renibacterium salmoninarum (strain ATCC 33209 / DSM 20767 / JCM 11484 / NBRC 15589 / NCIMB 2235) protein is Formate--tetrahydrofolate ligase.